The sequence spans 306 residues: Phosphoadenosine phosphosulfate reductase (306 aa).

2 disordered regions span residues 1–30 (MPAK…VSGG) and 245–266 (YHST…KGQA).

It belongs to the PAPS reductase family. CysH subfamily.

It carries out the reaction [thioredoxin]-disulfide + sulfite + adenosine 3',5'-bisphosphate + 2 H(+) = [thioredoxin]-dithiol + 3'-phosphoadenylyl sulfate. It participates in sulfur metabolism; hydrogen sulfide biosynthesis; sulfite from sulfate: step 3/3. In terms of biological role, the NADP dependent reduction of PAPS into sulfite involves thioredoxin which probably plays the role of a thiol carrier. The chain is Phosphoadenosine phosphosulfate reductase (sA) from Emericella nidulans (strain FGSC A4 / ATCC 38163 / CBS 112.46 / NRRL 194 / M139) (Aspergillus nidulans).